A 121-amino-acid chain; its full sequence is MARIAGVDLPRNKRVAIGLTYIYGIGHSKAEEIVEQTGVSTDTRVKDLTEDEVNRLRSTIDNDYTVEGDLRREISMNIKRLMEIGCYRGLRHRRGLPVRGQSTKNNARTRKGPKRTVGAKR.

The tract at residues 94 to 121 is disordered; the sequence is RGLPVRGQSTKNNARTRKGPKRTVGAKR. Positions 107 to 121 are enriched in basic residues; sequence ARTRKGPKRTVGAKR.

Belongs to the universal ribosomal protein uS13 family. As to quaternary structure, part of the 30S ribosomal subunit. Forms a loose heterodimer with protein S19. Forms two bridges to the 50S subunit in the 70S ribosome.

Functionally, located at the top of the head of the 30S subunit, it contacts several helices of the 16S rRNA. In the 70S ribosome it contacts the 23S rRNA (bridge B1a) and protein L5 of the 50S subunit (bridge B1b), connecting the 2 subunits; these bridges are implicated in subunit movement. Contacts the tRNAs in the A and P-sites. The polypeptide is Small ribosomal subunit protein uS13 (Natranaerobius thermophilus (strain ATCC BAA-1301 / DSM 18059 / JW/NM-WN-LF)).